Consider the following 212-residue polypeptide: Peptide methionine sulfoxide reductase MsrA (212 aa).

Residue C52 is part of the active site.

Belongs to the MsrA Met sulfoxide reductase family.

The catalysed reaction is L-methionyl-[protein] + [thioredoxin]-disulfide + H2O = L-methionyl-(S)-S-oxide-[protein] + [thioredoxin]-dithiol. The enzyme catalyses [thioredoxin]-disulfide + L-methionine + H2O = L-methionine (S)-S-oxide + [thioredoxin]-dithiol. Has an important function as a repair enzyme for proteins that have been inactivated by oxidation. Catalyzes the reversible oxidation-reduction of methionine sulfoxide in proteins to methionine. The chain is Peptide methionine sulfoxide reductase MsrA from Escherichia coli O127:H6 (strain E2348/69 / EPEC).